We begin with the raw amino-acid sequence, 208 residues long: Translation initiation factor 6 (208 aa).

Belongs to the eIF-6 family.

In terms of biological role, binds to the 50S ribosomal subunit and prevents its association with the 30S ribosomal subunit to form the 70S initiation complex. The chain is Translation initiation factor 6 (eif6) from Nanoarchaeum equitans (strain Kin4-M).